Reading from the N-terminus, the 113-residue chain is MPFQSTVGDYQTVATLETFGFLPPMTQDEIYDQIAYIIAQGWSPVIEHVHPSGSMQTYWSYWKLPFFGEKDLNMVVSELEACHRAYPDHHVRMVGYDAYTQSQGTAFVVFEGR.

Belongs to the RuBisCO small chain family. Heterohexadecamer of 8 large and 8 small subunits. Forms a CsoS2-CsoS1-RuBisCO complex.

It localises to the carboxysome. Its function is as follows. RuBisCO catalyzes two reactions: the carboxylation of D-ribulose 1,5-bisphosphate, the primary event in carbon dioxide fixation, as well as the oxidative fragmentation of the pentose substrate in the photorespiration process. Both reactions occur simultaneously and in competition at the same active site. Although the small subunit is not catalytic it is essential for maximal activity. This is Ribulose bisphosphate carboxylase small subunit from Prochlorococcus marinus (strain MIT 9313).